A 121-amino-acid chain; its full sequence is MIISINKKKARLRRAARTRFQIKKLHLIRLVVHRTSKHIYAQIIDSKNALVLTSASTVEKEILNLVKYTGNIHASICIGKKIAERALMKGIINVSFDRSGFQYHGRVKALADAARESGLKF.

The protein belongs to the universal ribosomal protein uL18 family. Part of the 50S ribosomal subunit; part of the 5S rRNA/L5/L18/L25 subcomplex. Contacts the 5S and 23S rRNAs.

This is one of the proteins that bind and probably mediate the attachment of the 5S RNA into the large ribosomal subunit, where it forms part of the central protuberance. In Buchnera aphidicola subsp. Baizongia pistaciae (strain Bp), this protein is Large ribosomal subunit protein uL18.